The following is a 463-amino-acid chain: L-seryl-tRNA(Sec) selenium transferase (463 aa).

Lysine 295 carries the post-translational modification N6-(pyridoxal phosphate)lysine.

It belongs to the SelA family. Homodecamer; pentamer of dimers. Binds only one seryl-tRNA(Sec) per dimer. Pyridoxal 5'-phosphate serves as cofactor.

The protein resides in the cytoplasm. The catalysed reaction is L-seryl-tRNA(Sec) + selenophosphate + H(+) = L-selenocysteinyl-tRNA(Sec) + phosphate. Its pathway is aminoacyl-tRNA biosynthesis; selenocysteinyl-tRNA(Sec) biosynthesis; selenocysteinyl-tRNA(Sec) from L-seryl-tRNA(Sec) (bacterial route): step 1/1. Converts seryl-tRNA(Sec) to selenocysteinyl-tRNA(Sec) required for selenoprotein biosynthesis. This Salmonella paratyphi B (strain ATCC BAA-1250 / SPB7) protein is L-seryl-tRNA(Sec) selenium transferase.